We begin with the raw amino-acid sequence, 766 residues long: Serine/threonine-protein kinase B-raf (766 aa).

Positions Met1–Glu13 are enriched in gly residues. The segment at Met1–Ala38 is disordered. Ala2 is subject to N-acetylalanine. Ser151 bears the Phosphoserine mark. Residues Pro155–Leu227 enclose the RBD domain. The Phorbol-ester/DAG-type zinc finger occupies Thr234–Cys280. His235, Cys248, Cys251, Cys261, Cys264, His269, Cys272, and Cys280 together coordinate Zn(2+). The segment at Ala308–Asp454 is disordered. The segment covering Ser314–Pro341 has biased composition (low complexity). Ser333 carries the phosphoserine modification. The segment covering Pro348–Ser363 has biased composition (basic and acidic residues). A Phosphoserine; by SGK1 modification is found at Ser365. Thr373 is subject to Phosphothreonine; by autocatalysis. Thr396 is subject to Phosphothreonine. Ser399 bears the Phosphoserine mark. Thr401 carries the phosphothreonine modification. Residues Gln423–Ser447 are compositionally biased toward basic and acidic residues. Phosphoserine occurs at positions 446 and 447. A Protein kinase domain is found at Ile457 to Leu717. ATP-binding positions include Ile463–Val471 and Lys483. Residue Asp576 is the Proton acceptor of the active site. Lys578 is covalently cross-linked (Glycyl lysine isopeptide (Lys-Gly) (interchain with G-Cter in ubiquitin)). Residue Arg671 is modified to Omega-N-methylarginine; by PRMT5. Ser729 and Ser750 each carry phosphoserine. A Phosphothreonine; by MAPK1 modification is found at Thr753.

The protein belongs to the protein kinase superfamily. TKL Ser/Thr protein kinase family. RAF subfamily. In terms of assembly, monomer. Homodimer. Heterodimerizes with RAF1, and the heterodimer possesses a highly increased kinase activity compared to the respective homodimers or monomers. Heterodimerization is mitogen-regulated and enhanced by 14-3-3 proteins. MAPK1/ERK2 activation can induce a negative feedback that promotes the dissociation of the heterodimer by phosphorylating BRAF at Thr-753. Heterodimerizes (via N-terminus) with KSR1 (via N-terminus) or KSR2 (via N-terminus) in a MAP2K1-dependent manner. Interacts with MAP2K1 and MAP2K2. Found in a complex with at least BRAF, HRAS, MAP2K1, MAPK3 and RGS14. Interacts with RIT1. Interacts (via N-terminus) with RGS14 (via RBD domains); the interaction mediates the formation of a ternary complex with RAF1, a ternary complex inhibited by GNAI1. Interacts with DGKH. Interacts with PRMT5. Interacts with KSR2. Interacts with AKAP13, MAP2K1 and KSR1. Identified in a complex with AKAP13, MAP2K1 and KSR1. Interacts with FNIP1 and FNIP2. Requires Zn(2+) as cofactor. Post-translationally, phosphorylation at Ser-365 by SGK1 inhibits its activity. Phosphorylation at Thr-753 by MAPK1. Dephosphorylation of Ser-365 by the SHOC2-MRAS-PP1c (SMP) complex consisting of SHOC2, GTP-bound M-Ras/MRAS and the catalytic subunit of protein phosphatase 1 (PPP1CA, PPP1CB or PPP1CC); this relieves inactivation and stimulates kinase activity. In terms of processing, methylation at Arg-671 decreases stability and kinase activity. Ubiquitinated by RNF149; which leads to proteasomal degradation. Polyubiquitinated at Lys-578 in response to EGF. Brain and testis.

The protein localises to the nucleus. The protein resides in the cytoplasm. It is found in the cell membrane. It catalyses the reaction L-seryl-[protein] + ATP = O-phospho-L-seryl-[protein] + ADP + H(+). It carries out the reaction L-threonyl-[protein] + ATP = O-phospho-L-threonyl-[protein] + ADP + H(+). In quiescent cells, maintained in an inactive state via an intramolecular interaction between the protein kinase and N-terminal domains. Following mitogen-mediated cell activation, binds via its RGB domain to active HRAS (GTP-bound) which releases the inhibitory intramolecular interaction between the two domains. This allows the MAP2K1-mediated dimerization of KSR1 or KSR2, and BRAF which activates BRAF. In terms of biological role, protein kinase involved in the transduction of mitogenic signals from the cell membrane to the nucleus. Phosphorylates MAP2K1, and thereby activates the MAP kinase signal transduction pathway. Phosphorylates PFKFB2. May play a role in the postsynaptic responses of hippocampal neurons. The protein is Serine/threonine-protein kinase B-raf of Homo sapiens (Human).